Reading from the N-terminus, the 123-residue chain is Large ribosomal subunit protein bL20 (123 aa).

Residues 1 to 15 (MARVKRSVNAKKKRR) show a composition bias toward basic residues. A disordered region spans residues 1 to 23 (MARVKRSVNAKKKRREVLDQASG).

It belongs to the bacterial ribosomal protein bL20 family.

Its function is as follows. Binds directly to 23S ribosomal RNA and is necessary for the in vitro assembly process of the 50S ribosomal subunit. It is not involved in the protein synthesizing functions of that subunit. This chain is Large ribosomal subunit protein bL20, found in Cutibacterium acnes (strain DSM 16379 / KPA171202) (Propionibacterium acnes).